A 222-amino-acid polypeptide reads, in one-letter code: Sortase A (222 aa).

The Cytoplasmic segment spans residues M1–A7. Residues I8–V28 form a helical membrane-spanning segment. The Extracellular portion of the chain corresponds to K29–K222. H127 functions as the Proton donor/acceptor in the catalytic mechanism. C188 functions as the Acyl-thioester intermediate in the catalytic mechanism.

The protein belongs to the bacterial sortase family. Class A subfamily.

The protein resides in the cell membrane. Activity is enhanced by Zn(2+) and strongly enhanced by Ca(2+). Inhibited by chalcone, a precursor of several flavonoids, which blocks the SrtA active site. Functionally, transpeptidase that anchors surface proteins to the cell wall. Recognizes and modifies its substrate by proteolytic cleavage of a C-terminal sorting signal. Following cleavage, a covalent intermediate is formed via a thioester bond between the sortase and its substrate, which is then transferred and covalently attached to the cell wall. This sortase recognizes a Leu-Pro-x-Thr-Gly (LPXTG) motif, which is cleaved by the sortase between the threonine and glycine residues. Involved in pathogenesis. May regulate the rate of synthesis and/or the stability of a subset of LPXTG proteins. Not involved in cell wall-anchoring of Hbp2 (SvpA) or Hbp1. In Listeria monocytogenes serovar 1/2a (strain ATCC BAA-679 / EGD-e), this protein is Sortase A.